The primary structure comprises 290 residues: Signal recognition particle receptor subunit beta (290 aa).

Residues 44–64 (VLLLALFTLIFIIIISKLFGS) form a helical membrane-spanning segment. Residues 92-100 (GLSNAGKTA), 114-117 (THTS), G140, and A268 each bind GTP.

The protein belongs to the SRP receptor beta subunit family. Heterodimer of an alpha and a beta chain.

Its subcellular location is the endoplasmic reticulum membrane. Its function is as follows. Component of the signal recognition particle (SRP) complex receptor (SR). Ensures, in conjunction with the SRP complex, the correct targeting of the nascent secretory proteins to the endoplasmic reticulum membrane system. May mediate the membrane association of SR. The protein is Signal recognition particle receptor subunit beta (srprb) of Dictyostelium discoideum (Social amoeba).